Consider the following 352-residue polypeptide: [Citrate [pro-3S]-lyase] ligase (352 aa).

The N-acetyltransferase domain maps to Met1–Thr128.

The enzyme catalyses holo-[citrate lyase ACP] + acetate + ATP = acetyl-[citrate lyase ACP] + AMP + diphosphate. Its function is as follows. Acetylation of prosthetic group (2-(5''-phosphoribosyl)-3'-dephosphocoenzyme-A) of the gamma subunit of citrate lyase. The chain is [Citrate [pro-3S]-lyase] ligase (citC) from Escherichia coli (strain K12).